A 34-amino-acid polypeptide reads, in one-letter code: Crassicorin-II (34 aa).

A disulfide bridge connects residues Cys6 and Cys30.

Highly expressed by the mesenteries. Moderately expressed by the pharynx. Weakly expressed by the gonad and pedal disk. No expression in tentacle.

It localises to the secreted. Its subcellular location is the nematocyst. Its function is as follows. Peptide with both antimicrobial and neurotoxin activities. Cationic AMP with antimicrobial activity against both Gram-positive bacteria (B.subtilis) and Gram-negative bacteria (E.coli and S.enterica). Shows no significant antimicrobial activity against bacteria S.aureus and P.aeruginosa, as well as the fungus C.albicans. In vivo, induces reversible paralytic activity towards the shrimp P.paucidens. May act by impairing sodium or potassium channels in the prey. The chain is Crassicorin-II from Urticina crassicornis (Mottled anemone).